We begin with the raw amino-acid sequence, 859 residues long: Alanine--tRNA ligase (859 aa).

Residues histidine 562, histidine 566, cysteine 664, and histidine 668 each contribute to the Zn(2+) site.

This sequence belongs to the class-II aminoacyl-tRNA synthetase family. The cofactor is Zn(2+).

Its subcellular location is the cytoplasm. It catalyses the reaction tRNA(Ala) + L-alanine + ATP = L-alanyl-tRNA(Ala) + AMP + diphosphate. Catalyzes the attachment of alanine to tRNA(Ala) in a two-step reaction: alanine is first activated by ATP to form Ala-AMP and then transferred to the acceptor end of tRNA(Ala). Also edits incorrectly charged Ser-tRNA(Ala) and Gly-tRNA(Ala) via its editing domain. The protein is Alanine--tRNA ligase of Aliivibrio fischeri (strain ATCC 700601 / ES114) (Vibrio fischeri).